The chain runs to 209 residues: Small ribosomal subunit protein mS23 (209 aa).

It belongs to the mitochondrion-specific ribosomal protein mS23 family. Component of the mitochondrial small ribosomal subunit.

Its subcellular location is the mitochondrion. This Sclerotinia sclerotiorum (strain ATCC 18683 / 1980 / Ss-1) (White mold) protein is Small ribosomal subunit protein mS23 (rsm25).